The chain runs to 251 residues: Ribosome maturation factor RimP (251 aa).

The disordered stretch occupies residues 198 to 251 (NLGLEPPAAPHAKISEKTTKNTKPKKKPAPTNTKKHRLAAERARRGEIEPDEGD). Positions 217 to 234 (KNTKPKKKPAPTNTKKHR) are enriched in basic residues. Over residues 235–245 (LAAERARRGEI) the composition is skewed to basic and acidic residues.

The protein belongs to the RimP family.

The protein resides in the cytoplasm. Functionally, required for maturation of 30S ribosomal subunits. In Bradyrhizobium diazoefficiens (strain JCM 10833 / BCRC 13528 / IAM 13628 / NBRC 14792 / USDA 110), this protein is Ribosome maturation factor RimP.